The primary structure comprises 174 residues: ATP synthase subunit b 2 (174 aa).

A helical membrane pass occupies residues 27–47; it reads IFWLIITLVAIYLILTKVALP.

This sequence belongs to the ATPase B chain family. In terms of assembly, F-type ATPases have 2 components, F(1) - the catalytic core - and F(0) - the membrane proton channel. F(1) has five subunits: alpha(3), beta(3), gamma(1), delta(1), epsilon(1). F(0) has three main subunits: a(1), b(2) and c(10-14). The alpha and beta chains form an alternating ring which encloses part of the gamma chain. F(1) is attached to F(0) by a central stalk formed by the gamma and epsilon chains, while a peripheral stalk is formed by the delta and b chains.

It is found in the cell inner membrane. Its function is as follows. F(1)F(0) ATP synthase produces ATP from ADP in the presence of a proton or sodium gradient. F-type ATPases consist of two structural domains, F(1) containing the extramembraneous catalytic core and F(0) containing the membrane proton channel, linked together by a central stalk and a peripheral stalk. During catalysis, ATP synthesis in the catalytic domain of F(1) is coupled via a rotary mechanism of the central stalk subunits to proton translocation. Component of the F(0) channel, it forms part of the peripheral stalk, linking F(1) to F(0). The b'-subunit is a diverged and duplicated form of b found in plants and photosynthetic bacteria. The chain is ATP synthase subunit b 2 (atpF2) from Dinoroseobacter shibae (strain DSM 16493 / NCIMB 14021 / DFL 12).